The sequence spans 158 residues: 2-C-methyl-D-erythritol 2,4-cyclodiphosphate synthase (158 aa).

A divalent metal cation-binding residues include Asp9 and His11. 4-CDP-2-C-methyl-D-erythritol 2-phosphate contacts are provided by residues Asp9 to His11 and His35 to Ser36. His43 contributes to the a divalent metal cation binding site. Residues Asp57–Gly59, Phe62–Asp66, Thr133–Glu136, Phe140, and Arg143 contribute to the 4-CDP-2-C-methyl-D-erythritol 2-phosphate site.

Belongs to the IspF family. Homotrimer. Requires a divalent metal cation as cofactor.

The enzyme catalyses 4-CDP-2-C-methyl-D-erythritol 2-phosphate = 2-C-methyl-D-erythritol 2,4-cyclic diphosphate + CMP. It functions in the pathway isoprenoid biosynthesis; isopentenyl diphosphate biosynthesis via DXP pathway; isopentenyl diphosphate from 1-deoxy-D-xylulose 5-phosphate: step 4/6. Involved in the biosynthesis of isopentenyl diphosphate (IPP) and dimethylallyl diphosphate (DMAPP), two major building blocks of isoprenoid compounds. Catalyzes the conversion of 4-diphosphocytidyl-2-C-methyl-D-erythritol 2-phosphate (CDP-ME2P) to 2-C-methyl-D-erythritol 2,4-cyclodiphosphate (ME-CPP) with a corresponding release of cytidine 5-monophosphate (CMP). The chain is 2-C-methyl-D-erythritol 2,4-cyclodiphosphate synthase from Actinobacillus succinogenes (strain ATCC 55618 / DSM 22257 / CCUG 43843 / 130Z).